Consider the following 301-residue polypeptide: Glycine--tRNA ligase alpha subunit (301 aa).

This sequence belongs to the class-II aminoacyl-tRNA synthetase family. Tetramer of two alpha and two beta subunits.

Its subcellular location is the cytoplasm. The enzyme catalyses tRNA(Gly) + glycine + ATP = glycyl-tRNA(Gly) + AMP + diphosphate. This chain is Glycine--tRNA ligase alpha subunit, found in Shewanella loihica (strain ATCC BAA-1088 / PV-4).